The primary structure comprises 209 residues: Large ribosomal subunit protein uL3 (209 aa).

Residues 130-154 form a disordered region; that stretch reads RGPMSHGSKFHRAVGSMGASSDPSR.

The protein belongs to the universal ribosomal protein uL3 family. Part of the 50S ribosomal subunit. Forms a cluster with proteins L14 and L19.

Functionally, one of the primary rRNA binding proteins, it binds directly near the 3'-end of the 23S rRNA, where it nucleates assembly of the 50S subunit. The sequence is that of Large ribosomal subunit protein uL3 from Clostridium kluyveri (strain NBRC 12016).